A 124-amino-acid polypeptide reads, in one-letter code: Large ribosomal subunit protein bL12 (124 aa).

It belongs to the bacterial ribosomal protein bL12 family. Homodimer. Part of the ribosomal stalk of the 50S ribosomal subunit. Forms a multimeric L10(L12)X complex, where L10 forms an elongated spine to which 2 to 4 L12 dimers bind in a sequential fashion. Binds GTP-bound translation factors.

Functionally, forms part of the ribosomal stalk which helps the ribosome interact with GTP-bound translation factors. Is thus essential for accurate translation. This Brucella anthropi (strain ATCC 49188 / DSM 6882 / CCUG 24695 / JCM 21032 / LMG 3331 / NBRC 15819 / NCTC 12168 / Alc 37) (Ochrobactrum anthropi) protein is Large ribosomal subunit protein bL12.